Consider the following 170-residue polypeptide: Translation machinery-associated protein 16 homolog (170 aa).

Belongs to the TMA16 family.

The polypeptide is Translation machinery-associated protein 16 homolog (Dictyostelium discoideum (Social amoeba)).